The chain runs to 343 residues: Fructose-1,6-bisphosphatase class 1 (343 aa).

The Mg(2+) site is built by glutamate 99, aspartate 121, leucine 123, and aspartate 124. Residues 124-127, asparagine 218, tyrosine 250, and lysine 283 contribute to the substrate site; that span reads DGSS. Glutamate 289 is a binding site for Mg(2+).

This sequence belongs to the FBPase class 1 family. Homotetramer. Mg(2+) serves as cofactor.

The protein resides in the cytoplasm. It catalyses the reaction beta-D-fructose 1,6-bisphosphate + H2O = beta-D-fructose 6-phosphate + phosphate. It functions in the pathway carbohydrate biosynthesis; gluconeogenesis. The sequence is that of Fructose-1,6-bisphosphatase class 1 from Leptospira biflexa serovar Patoc (strain Patoc 1 / Ames).